A 435-amino-acid chain; its full sequence is Cyclin-dependent kinase 14 (435 aa).

A compositionally biased stretch (polar residues) spans 75–92 (RTQSSFDPFEKTSNQPTS). Positions 75-97 (RTQSSFDPFEKTSNQPTSPKFGK) are disordered. One can recognise a Protein kinase domain in the interval 101-385 (YEKLEKLGEG…AQAALNHDYF (285 aa)). Residues 107–115 (LGEGSYATV) and Lys-130 each bind ATP. Asp-222 (proton acceptor) is an active-site residue.

Belongs to the protein kinase superfamily. CMGC Ser/Thr protein kinase family. CDC2/CDKX subfamily. As to quaternary structure, interacts with ccny; ccny mediates its recruitment to the plasma membrane and promotes phosphorylation of lrp6.

Its subcellular location is the cell membrane. The catalysed reaction is L-seryl-[protein] + ATP = O-phospho-L-seryl-[protein] + ADP + H(+). It carries out the reaction L-threonyl-[protein] + ATP = O-phospho-L-threonyl-[protein] + ADP + H(+). In terms of biological role, serine/threonine-protein kinase involved in the control of the eukaryotic cell cycle, whose activity is controlled by an associated cyclin. Acts as a cell-cycle regulator of Wnt signaling pathway during G2/M phase by mediating the phosphorylation of lrp6, leading to the activation of the Wnt signaling pathway. This Xenopus laevis (African clawed frog) protein is Cyclin-dependent kinase 14 (cdk14).